The sequence spans 293 residues: Calcium uniporter protein 2, mitochondrial (293 aa).

The transit peptide at 1-33 directs the protein to the mitochondrion; sequence MWSVMGLVRRTAMSSTVNKASPVRSLLGGFRCL. A helical membrane pass occupies residues 168–188; that stretch reads ILWGGLGYSVVQIGIFVRLTF. The Selectivity filter motif lies at 193 to 201; sequence WDVMEPITF. Position 197 (Glu-197) interacts with Ca(2+). The helical transmembrane segment at 198–218 threads the bilayer; that stretch reads PITFFTTATGIIVGYAYFLMT.

The protein belongs to the MCU (TC 1.A.77) family.

The protein localises to the mitochondrion inner membrane. The enzyme catalyses Ca(2+)(in) = Ca(2+)(out). In terms of biological role, mitochondrial inner membrane calcium uniporter that mediates calcium uptake into mitochondria. Constitutes a pore-forming and calcium-conducting subunit. Mitochondrial calcium homeostasis plays key roles in cellular physiology and regulates cell bioenergetics, cytoplasmic calcium signals and activation of cell death pathways. The chain is Calcium uniporter protein 2, mitochondrial from Arabidopsis thaliana (Mouse-ear cress).